The sequence spans 150 residues: Macrodomain Ter protein (150 aa).

This sequence belongs to the MatP family. Homodimer.

Its subcellular location is the cytoplasm. Required for spatial organization of the terminus region of the chromosome (Ter macrodomain) during the cell cycle. Prevents early segregation of duplicated Ter macrodomains during cell division. Binds specifically to matS, which is a 13 bp signature motif repeated within the Ter macrodomain. The polypeptide is Macrodomain Ter protein (Citrobacter koseri (strain ATCC BAA-895 / CDC 4225-83 / SGSC4696)).